A 220-amino-acid chain; its full sequence is Fructose-6-phosphate aldolase (220 aa).

The active-site Schiff-base intermediate with substrate is the Lys-85.

It belongs to the transaldolase family. Type 3A subfamily. Homodecamer.

Its subcellular location is the cytoplasm. It carries out the reaction beta-D-fructose 6-phosphate = dihydroxyacetone + D-glyceraldehyde 3-phosphate. In terms of biological role, catalyzes the reversible formation of fructose 6-phosphate from dihydroxyacetone and D-glyceraldehyde 3-phosphate via an aldolization reaction. In Salmonella typhi, this protein is Fructose-6-phosphate aldolase.